A 180-amino-acid chain; its full sequence is V-type proton ATPase subunit c''1 (180 aa).

Residues 1 to 26 (MSGVVALGHASSWGAALVRISPYTFS) lie on the Lumenal side of the membrane. Residues 27–47 (AIGIAISIGVSVLGAAWGIYI) form a helical membrane-spanning segment. At 48 to 66 (TGSSLIGAAIEAPRITSKN) the chain is on the cytoplasmic side. The helical transmembrane segment at 67–87 (LISVIFCEAVAIYGVIVAIIL) threads the bilayer. The Lumenal portion of the chain corresponds to 88–110 (QTKLESVPSSKMYDAESLRAGYA). A helical membrane pass occupies residues 111-131 (IFASGIIVGFANLVCGLCVGI). At 132–149 (IGSSCALSDAQNSTLFVK) the chain is on the cytoplasmic side. The chain crosses the membrane as a helical span at residues 150 to 170 (ILVIEIFGSALGLFGVIVGII). At 171 to 180 (MSAQATWPTK) the chain is on the lumenal side.

It belongs to the V-ATPase proteolipid subunit family. As to quaternary structure, V-ATPase is a heteromultimeric enzyme composed of a peripheral catalytic V1 complex (components A to H) attached to an integral membrane V0 proton pore complex (components: a, c, c'', d and e). The proteolipid components c and c'' are present as a hexameric ring that forms the proton-conducting pore. Preferentially expressed in roots.

The protein localises to the endoplasmic reticulum membrane. It is found in the golgi apparatus membrane. Proton-conducting pore forming subunit of the membrane integral V0 complex of vacuolar ATPase. V-ATPase is responsible for acidifying a variety of intracellular compartments in eukaryotic cells. The sequence is that of V-type proton ATPase subunit c''1 (VHA-c''1) from Arabidopsis thaliana (Mouse-ear cress).